Here is a 757-residue protein sequence, read N- to C-terminus: RNA-directed RNA polymerase catalytic subunit (757 aa).

The tract at residues Ser50 to Tyr82 is disordered. Over residues Trp55–Pro64 the composition is skewed to polar residues. Short sequence motifs (nuclear localization signal) lie at residues Arg187–Met195 and Arg203–Ser216. The segment at Arg249–Glu256 is promoter-binding site. In terms of domain architecture, RdRp catalytic spans Val286–Tyr483.

It belongs to the influenza viruses polymerase PB1 family. As to quaternary structure, influenza RNA polymerase is composed of three subunits: PB1, PB2 and PA. Interacts (via N-terminus) with PA (via C-terminus). Interacts (via C-terminus) with PB2 (via N-terminus); this interaction is essential for transcription initiation. Phosphorylated by host PRKCA.

The protein localises to the host nucleus. Its subcellular location is the host cytoplasm. It catalyses the reaction RNA(n) + a ribonucleoside 5'-triphosphate = RNA(n+1) + diphosphate. Its function is as follows. RNA-dependent RNA polymerase which is responsible for replication and transcription of virus RNA segments. The transcription of viral mRNAs occurs by a unique mechanism called cap-snatching. 5' methylated caps of cellular mRNAs are cleaved after 10-13 nucleotides by PA. In turn, these short capped RNAs are used as primers by PB1 for transcription of viral mRNAs. During virus replication, PB1 initiates RNA synthesis and copy vRNA into complementary RNA (cRNA) which in turn serves as a template for the production of more vRNAs. The chain is RNA-directed RNA polymerase catalytic subunit from Influenza A virus (strain A/Duck/Germany/1949 H10N7).